The sequence spans 364 residues: MSQKDYYEILGVAKNADAKQIKKAYKRLAMKHHPDRVKNDKASAEKKFKEIQKAYAILSDVQKRQAYDQFGHVGGNANVGSAGGNPFGGGFGDIFGDIFGGGSQQSNNRGSDLRYDLEIDLKKAAQGSTVKIRIPKNETCDTCSGIGAKSGTNVKTCSICSGVGQVQTQQGFFTVQRPCGTCSGTGQKIEFPCGTCRGQGLVRKQKTLSVKIPAGVDTGNRIRLSGEGEAGTIGSSSGDLYVQVHVKKHAIFEREDNDLYCEVPIDFATAALGGSIEVPTLENKLKIKVPSGTQTGKLFRLRDKGISHLQRDGSGDLICQVKIETPVNLNKKQQDLLQKFSSSCGKKHHPESDSFFDKMKSFFG.

The J domain occupies 5–71 (DYYEILGVAK…QKRQAYDQFG (67 aa)). Residues 127–205 (GSTVKIRIPK…CRGQGLVRKQ (79 aa)) form a CR-type zinc finger. Residues Cys140, Cys143, Cys157, Cys160, Cys179, Cys182, Cys193, and Cys196 each coordinate Zn(2+). 4 CXXCXGXG motif repeats span residues 140–147 (CDTCSGIG), 157–164 (CSICSGVG), 179–186 (CGTCSGTG), and 193–200 (CGTCRGQG).

The protein belongs to the DnaJ family. As to quaternary structure, homodimer. Zn(2+) serves as cofactor.

The protein resides in the cytoplasm. In terms of biological role, participates actively in the response to hyperosmotic and heat shock by preventing the aggregation of stress-denatured proteins and by disaggregating proteins, also in an autonomous, DnaK-independent fashion. Unfolded proteins bind initially to DnaJ; upon interaction with the DnaJ-bound protein, DnaK hydrolyzes its bound ATP, resulting in the formation of a stable complex. GrpE releases ADP from DnaK; ATP binding to DnaK triggers the release of the substrate protein, thus completing the reaction cycle. Several rounds of ATP-dependent interactions between DnaJ, DnaK and GrpE are required for fully efficient folding. Also involved, together with DnaK and GrpE, in the DNA replication of plasmids through activation of initiation proteins. The polypeptide is Chaperone protein DnaJ (Ruthia magnifica subsp. Calyptogena magnifica).